A 677-amino-acid chain; its full sequence is MEASRGPPRVKNKAPAPQQISAEQLLREAVDRQEPALQAPTQRFADLEELHEYQGRKRKEFEDYVRRNRISMNNWMRYAQWELEQKEFRRARSVFERALDVDPTAVVLWIRYIEAEMKTRNINHARNLLDRAVTIYSRVDKLWYKYVYMEEMLGNIPGTRQVFERWMSWEPDEGAWGAYIKLEKRYNEFDRVRAIFERFTVVHPEPKNWIKWARFEEEYGTSDMVREVYGLAIETLGEDFMDEKLFIAYARYEAKLKEFERARAIYKYALDRLPRAKSVALHKAYTTFEKQFGDREGVEDVILSKRRVQYEEQIKENPKNYDIWFDFVRLEESSGDVERVRDVYERAIAQMPPSQEKRHWRRYIYLWIFYALWEELEAKDMERAHQIYQECIRLIPHKKFTFAKIWLMKAQFEIRQMDLQAARKTLGHAIGACPKDKLFKGYIDLERQLFEFVRCRKLFEKQIEWSPSNCQAWIKFAELERGLDDIDRARAIYELGISQPVLDMPELLWKSYIDFEEYEGEYDRTRALYERLLEKTNHVKVWINFARFEINIPEGEEEDEDEEEKPVSEEAKRRARMVFERAHKVFKEKEMKEERVALLNAWKSFEQTHGSPDDIAKIERQMPSKVKKRRKLDDDRYEEYLDYMFPADDESSAKLSQILQMAHKWKKEQASKASKET.

HAT repeat units follow at residues 52–84 (EYQGRKRKEFEDYVRRNRISMNNWMRYAQWELE), 86–118 (KEFRRARSVFERALDVDPTAVVLWIRYIEAEMK), 120–152 (RNINHARNLLDRAVTIYSRVDKLWYKYVYMEEM), 154–185 (GNIPGTRQVFERWMSWEPDEGAWGAYIKLEKR), 187–218 (NEFDRVRAIFERFTVVHPEPKNWIKWARFEEE), 220–255 (GTSDMVREVYGLAIETLGEDFMDEKLFIAYARYEAK), 257–291 (KEFERARAIYKYALDRLPRAKSVALHKAYTTFEKQ), 301–333 (VILSKRRVQYEEQIKENPKNYDIWFDFVRLEES), 335–369 (GDVERVRDVYERAIAQMPPSQEKRHWRRYIYLWIF), 379–415 (KDMERAHQIYQECIRLIPHKKFTFAKIWLMKAQFEIR), 417–448 (MDLQAARKTLGHAIGACPKDKLFKGYIDLERQ), 450–482 (FEFVRCRKLFEKQIEWSPSNCQAWIKFAELERG), 484–518 (DDIDRARAIYELGISQPVLDMPELLWKSYIDFEEY), 520–551 (GEYDRTRALYERLLEKTNHVKVWINFARFEIN), 570–608 (EAKRRARMVFERAHKVFKEKEMKEERVALLNAWKSFEQT), and 613–646 (DDIAKIERQMPSKVKKRRKLDDDRYEEYLDYMFP).

It belongs to the crooked-neck family. As to quaternary structure, associated with the spliceosome.

It is found in the nucleus. Functionally, involved in pre-mRNA splicing and cell cycle progression. Required for the spliceosome assembly and initiation of the DNA replication. The sequence is that of Pre-mRNA-splicing factor CLF1 (CLF1) from Paracoccidioides brasiliensis.